A 187-amino-acid chain; its full sequence is Phosphatidylethanolamine-binding protein 1 (187 aa).

At A2 the chain carries N-acetylalanine; in peptide hippocampal cholinergic neurostimulating. S6 and S13 each carry phosphoserine. T42 bears the Phosphothreonine mark. Phosphoserine is present on residues S52, S54, S98, and S153. The interval K93–D134 is interaction with RAF1.

This sequence belongs to the phosphatidylethanolamine-binding protein family. As to quaternary structure, has a tendency to form dimers by disulfide cross-linking. Interacts with RAF1 and this interaction is enhanced if RAF1 is phosphorylated on residues 'Ser-338', 'Ser-339', 'Tyr-340' and 'Tyr-341'. Interacts with ALOX15; in response to IL13/interleukin-13, prevents the interaction of PEBP1 with RAF1 to activate the ERK signaling cascade. In terms of tissue distribution, major component of epididymal secretions and sperm plasma membranes. It is present in cytosols from a variety of other tissues. Highly expressed in brain.

Its subcellular location is the cytoplasm. The protein localises to the membrane. Functionally, binds ATP, opioids and phosphatidylethanolamine. Has lower affinity for phosphatidylinositol and phosphatidylcholine. Serine protease inhibitor which inhibits thrombin, neuropsin and chymotrypsin but not trypsin, tissue type plasminogen activator and elastase. Inhibits the kinase activity of RAF1 by inhibiting its activation and by dissociating the RAF1/MEK complex and acting as a competitive inhibitor of MEK phosphorylation. HCNP may be involved in the function of the presynaptic cholinergic neurons of the central nervous system. HCNP increases the production of choline acetyltransferase but not acetylcholinesterase. Seems to be mediated by a specific receptor. The polypeptide is Phosphatidylethanolamine-binding protein 1 (Pebp1) (Rattus norvegicus (Rat)).